The primary structure comprises 255 residues: Post-GPI attachment to proteins factor 2 (255 aa).

The next 5 helical transmembrane spans lie at 23-43 (LALV…IWSL), 111-131 (LGIL…CLSF), 143-163 (NAFV…YLLN), 185-205 (LFLV…RHNS), and 209-229 (AGVY…NMGF).

Belongs to the PGAP2 family.

It localises to the golgi apparatus membrane. The protein localises to the endoplasmic reticulum membrane. In terms of biological role, involved in the lipid remodeling steps of GPI-anchor maturation. Required for stable expression of GPI-anchored proteins at the cell surface. This is Post-GPI attachment to proteins factor 2 from Drosophila melanogaster (Fruit fly).